Here is a 153-residue protein sequence, read N- to C-terminus: Ubiquitin-conjugating enzyme E2 35 (153 aa).

The 147-residue stretch at 5–151 folds into the UBC core domain; the sequence is NLPRRIIKET…AKEWTRLYAS (147 aa). The active-site Glycyl thioester intermediate is the Cys89.

It belongs to the ubiquitin-conjugating enzyme family. As to quaternary structure, interacts with yeast and human Mms2, with the RING domain of RGLG2 and with UEV1A, UEV1B, UEV1C and UEV1D. As to expression, ubiquitously expressed at low level. Mainly expressed in the vasculature.

It catalyses the reaction S-ubiquitinyl-[E1 ubiquitin-activating enzyme]-L-cysteine + [E2 ubiquitin-conjugating enzyme]-L-cysteine = [E1 ubiquitin-activating enzyme]-L-cysteine + S-ubiquitinyl-[E2 ubiquitin-conjugating enzyme]-L-cysteine.. Its pathway is protein modification; protein ubiquitination. Its function is as follows. Catalyzes the synthesis of non-canonical poly-ubiquitin chains that are linked through 'Lys-63'. This type of poly-ubiquitination does not lead to protein degradation by the proteasome. Mediates transcriptional activation of target genes. Required for postreplication repair of UV-damaged DNA and for adapting root developmental programs to suboptimal availability of iron. The protein is Ubiquitin-conjugating enzyme E2 35 (UBC35) of Arabidopsis thaliana (Mouse-ear cress).